The chain runs to 86 residues: YcgL domain-containing protein Smlt4554 (86 aa).

A YcgL domain is found at 1 to 85; it reads MHAYVYKSQL…SVASLMPRHY (85 aa).

In Stenotrophomonas maltophilia (strain K279a), this protein is YcgL domain-containing protein Smlt4554.